We begin with the raw amino-acid sequence, 296 residues long: Nucleotide-binding protein RSc0403 (296 aa).

Position 8 to 15 (8 to 15 (GMSGSGKS)) interacts with ATP. 57–60 (DIRS) contacts GTP. The disordered stretch occupies residues 99–124 (TRRRHPLSIRNGRPDAGNPPSAAKGP).

It belongs to the RapZ-like family.

In terms of biological role, displays ATPase and GTPase activities. In Ralstonia nicotianae (strain ATCC BAA-1114 / GMI1000) (Ralstonia solanacearum), this protein is Nucleotide-binding protein RSc0403.